Consider the following 180-residue polypeptide: ADP-ribosylation factor-like protein 1 (180 aa).

Glycine 2 is lipidated: N-myristoyl glycine. GTP is bound by residues 23–30, 66–70, and 125–128; these read GLDGAGKT, DLGGQ, and NKQD.

The protein belongs to the small GTPase superfamily. Arf family. In terms of tissue distribution, expressed in neuronal cells. Expression in hypodermal tissues is absent.

It is found in the golgi apparatus. It localises to the cytoplasm. The protein resides in the cytoplasmic granule. Functionally, GTP-binding protein that may be involved in protein trafficking; may modulate vesicle budding and uncoating within the Golgi apparatus. Plays a role in male tail tip morphogenesis. This chain is ADP-ribosylation factor-like protein 1, found in Caenorhabditis elegans.